Here is a 1429-residue protein sequence, read N- to C-terminus: Probable ATP-dependent RNA helicase spindle-E (1429 aa).

Positions 121 to 288 (VNAINTHQVV…FSTKVSVPPV (168 aa)) constitute a Helicase ATP-binding domain. 134 to 141 (GETGCGKT) lines the ATP pocket. Residues 234-237 (DEVH) carry the DEAH box motif. The Helicase C-terminal domain maps to 349 to 521 (QSEQSYDDAK…NSVLKAKLLD (173 aa)). One can recognise a Tudor domain in the interval 933–996 (AGVLTKGMMV…RLMTKELLSQ (64 aa)).

Belongs to the DEAD box helicase family. DEAH subfamily.

The protein localises to the cytoplasm. It carries out the reaction ATP + H2O = ADP + phosphate + H(+). Functionally, probable ATP-binding RNA helicase which plays a central role during spermatogenesis and oogenesis by repressing transposable elements and preventing their mobilization, which is essential for the germline integrity. Acts via the piRNA metabolic process, which mediates the repression of transposable elements during meiosis by forming complexes composed of piRNAs and Piwi and govern the methylation and subsequent repression of transposons. Involved in the repression of LTR retrotransposon copia. Also involved in telomere regulation by repressing specialized telomeric retroelements HeT-A, TAHRE, and TART; Drosophila telomeres being maintained by transposition of specialized telomeric retroelements. Involved in telomeric trans-silencing, a repression mechanism by which a transposon or a transgene inserted in subtelomeric heterochromatin has the capacity to repress in trans in the female germline, a homologous transposon, or transgene located in euchromatin. Involved in the repression of testis-expressed Stellate genes by the homologous Su(Ste) repeats. Required for anteroposterior and dorsoventral axis formation during oogenesis. The polypeptide is Probable ATP-dependent RNA helicase spindle-E (spn-E) (Drosophila ananassae (Fruit fly)).